Reading from the N-terminus, the 202-residue chain is MIQFIQHTGIVLPLDISDIDTDTIIPKQFLKATTRSNFGLYLFFNWRFLENTPKILNPNFVLNDPYYKHASILLTQRNFGCGSSREHAVWALMDYGFKVIIAPSFADIFHKNSFNNRLLLITLSELKINDLFKEIATQKKGISFTVNLHEQIIYVHNKKKCFFEINDFHKRCMLNNIDNISLTLQYDVAIKKYENNQPSYLK.

The protein belongs to the LeuD family. LeuD type 1 subfamily. In terms of assembly, heterodimer of LeuC and LeuD.

The catalysed reaction is (2R,3S)-3-isopropylmalate = (2S)-2-isopropylmalate. The protein operates within amino-acid biosynthesis; L-leucine biosynthesis; L-leucine from 3-methyl-2-oxobutanoate: step 2/4. Its function is as follows. Catalyzes the isomerization between 2-isopropylmalate and 3-isopropylmalate, via the formation of 2-isopropylmaleate. The polypeptide is 3-isopropylmalate dehydratase small subunit (Blochmanniella pennsylvanica (strain BPEN)).